The sequence spans 285 residues: Phosphatidylserine decarboxylase proenzyme (285 aa).

Active-site charge relay system; for autoendoproteolytic cleavage activity residues include aspartate 89, histidine 146, and serine 252. The active-site Schiff-base intermediate with substrate; via pyruvic acid; for decarboxylase activity is serine 252. Serine 252 carries the post-translational modification Pyruvic acid (Ser); by autocatalysis.

The protein belongs to the phosphatidylserine decarboxylase family. PSD-B subfamily. Prokaryotic type I sub-subfamily. Heterodimer of a large membrane-associated beta subunit and a small pyruvoyl-containing alpha subunit. Requires pyruvate as cofactor. Post-translationally, is synthesized initially as an inactive proenzyme. Formation of the active enzyme involves a self-maturation process in which the active site pyruvoyl group is generated from an internal serine residue via an autocatalytic post-translational modification. Two non-identical subunits are generated from the proenzyme in this reaction, and the pyruvate is formed at the N-terminus of the alpha chain, which is derived from the carboxyl end of the proenzyme. The autoendoproteolytic cleavage occurs by a canonical serine protease mechanism, in which the side chain hydroxyl group of the serine supplies its oxygen atom to form the C-terminus of the beta chain, while the remainder of the serine residue undergoes an oxidative deamination to produce ammonia and the pyruvoyl prosthetic group on the alpha chain. During this reaction, the Ser that is part of the protease active site of the proenzyme becomes the pyruvoyl prosthetic group, which constitutes an essential element of the active site of the mature decarboxylase.

It is found in the cell membrane. It carries out the reaction a 1,2-diacyl-sn-glycero-3-phospho-L-serine + H(+) = a 1,2-diacyl-sn-glycero-3-phosphoethanolamine + CO2. The protein operates within phospholipid metabolism; phosphatidylethanolamine biosynthesis; phosphatidylethanolamine from CDP-diacylglycerol: step 2/2. In terms of biological role, catalyzes the formation of phosphatidylethanolamine (PtdEtn) from phosphatidylserine (PtdSer). This Vibrio vulnificus (strain CMCP6) protein is Phosphatidylserine decarboxylase proenzyme.